We begin with the raw amino-acid sequence, 477 residues long: Probable cytosolic Fe-S cluster assembly factor GM20417 (477 aa).

8 residues coordinate [4Fe-4S] cluster: cysteine 23, cysteine 68, cysteine 71, cysteine 74, cysteine 187, cysteine 243, cysteine 395, and cysteine 399.

Belongs to the NARF family.

Functionally, component of the cytosolic iron-sulfur (Fe/S) protein assembly machinery. Required for maturation of extramitochondrial Fe/S proteins. The sequence is that of Probable cytosolic Fe-S cluster assembly factor GM20417 from Drosophila sechellia (Fruit fly).